Reading from the N-terminus, the 619-residue chain is Lateral signaling target protein 2 homolog (619 aa).

The FYVE-type zinc-finger motif lies at 501 to 561 (DSDCEQCTAC…VCNLCFLYKI (61 aa)). Residues Cys507, Cys510, Cys523, Cys526, Cys531, Cys534, Cys553, and Cys556 each coordinate Zn(2+). The segment at 598-619 (HERSQDGSQSNESPTATTATTI) is disordered. Over residues 603–619 (DGSQSNESPTATTATTI) the composition is skewed to polar residues.

The protein belongs to the lst-2 family.

Its function is as follows. Negative regulator of epidermal growth factor receptor (EGFR) signaling. The polypeptide is Lateral signaling target protein 2 homolog (Brugia malayi (Filarial nematode worm)).